A 276-amino-acid chain; its full sequence is F420-dependent methylenetetrahydromethanopterin dehydrogenase (276 aa).

This sequence belongs to the MTD family.

The enzyme catalyses 5,10-methylenetetrahydromethanopterin + oxidized coenzyme F420-(gamma-L-Glu)(n) + 2 H(+) = 5,10-methenyl-5,6,7,8-tetrahydromethanopterin + reduced coenzyme F420-(gamma-L-Glu)(n). Its pathway is one-carbon metabolism; methanogenesis from CO(2); 5,10-methylene-5,6,7,8-tetrahydromethanopterin from 5,10-methenyl-5,6,7,8-tetrahydromethanopterin (coenzyme F420 route): step 1/1. In terms of biological role, catalyzes the reversible reduction of methenyl-H(4)MPT(+) to methylene-H(4)MPT. This chain is F420-dependent methylenetetrahydromethanopterin dehydrogenase, found in Methanococcus vannielii (strain ATCC 35089 / DSM 1224 / JCM 13029 / OCM 148 / SB).